We begin with the raw amino-acid sequence, 310 residues long: Ribose-phosphate pyrophosphokinase (310 aa).

ATP is bound by residues 34–36 (DGE) and 93–94 (RQ). 2 residues coordinate Mg(2+): histidine 127 and aspartate 167. Lysine 190 is a catalytic residue. D-ribose 5-phosphate is bound by residues arginine 192, aspartate 216, and 220 to 224 (DSGGT).

The protein belongs to the ribose-phosphate pyrophosphokinase family. Class I subfamily. As to quaternary structure, homohexamer. It depends on Mg(2+) as a cofactor.

It localises to the cytoplasm. It carries out the reaction D-ribose 5-phosphate + ATP = 5-phospho-alpha-D-ribose 1-diphosphate + AMP + H(+). It participates in metabolic intermediate biosynthesis; 5-phospho-alpha-D-ribose 1-diphosphate biosynthesis; 5-phospho-alpha-D-ribose 1-diphosphate from D-ribose 5-phosphate (route I): step 1/1. Involved in the biosynthesis of the central metabolite phospho-alpha-D-ribosyl-1-pyrophosphate (PRPP) via the transfer of pyrophosphoryl group from ATP to 1-hydroxyl of ribose-5-phosphate (Rib-5-P). This chain is Ribose-phosphate pyrophosphokinase, found in Maricaulis maris (strain MCS10) (Caulobacter maris).